The sequence spans 1396 residues: uncharacterized protein (1396 aa).

Position 88 to 95 (88 to 95 (AYKKWGRS)) interacts with ATP. 2 disordered regions span residues 146-165 (EKIH…LSPT) and 198-388 (KPCS…VKDL). Residues 198–221 (KPCSYSSSSSSSTVPPASTDTSSP) show a composition bias toward low complexity. Residues 242–268 (MHEKAQSRSRHEKESKLSSSTIEEKPA) show a composition bias toward basic and acidic residues. Over residues 286 to 300 (SWSSGSSEAGSSSSG) the composition is skewed to low complexity. The segment covering 312-327 (VKVRHKAREIRNRKGR) has biased composition (basic residues). A phosphoserine mark is found at serine 817 and serine 1083. The segment at 1113–1137 (PISASELSPGGGSESEFESEKDEAS) is disordered. A phosphoserine mark is found at serine 1197 and serine 1339. A disordered region spans residues 1347-1396 (TGERGSETKPNGLHRKMCSSASSDTGDTGSEAGGEWVGPSREELFSRTHL). Positions 1365–1376 (SSASSDTGDTGS) are enriched in low complexity. The segment covering 1386–1396 (SREELFSRTHL) has biased composition (basic and acidic residues).

This is an uncharacterized protein from Mus musculus (Mouse).